We begin with the raw amino-acid sequence, 559 residues long: Potassium-transporting ATPase potassium-binding subunit (559 aa).

13 helical membrane passes run 5 to 25, 27 to 47, 63 to 83, 132 to 152, 170 to 190, 253 to 273, 283 to 303, 327 to 347, 356 to 376, 379 to 399, 416 to 436, 484 to 504, and 524 to 544; these read GFLLNASFLLILLVLAKPLGS, LARLIAAVPLPGVAGVERILW, LLALLTLNLLGLGILFCLLFW, GLTVQNFLSAATGIAVVFALI, LVRITLWILFPVALIIALFFI, LAQMLAIFLIPAALCFAFGEA, LLWAMSFIFVVCVAVVMWAEV, FGVLASSLFAVVTTAASCGAV, ALGGMVPMWLMQIGEVVFGGV, GLYGMLLFVLLAVFIAGLMIG, MTALAILVTPMLVLLGSALAM, LLAFCMFVGRFGVIIPVMAIA, and GALFIGLLIGTVLLVGALTFI.

The protein belongs to the KdpA family. In terms of assembly, the system is composed of three essential subunits: KdpA, KdpB and KdpC.

It is found in the cell inner membrane. Part of the high-affinity ATP-driven potassium transport (or Kdp) system, which catalyzes the hydrolysis of ATP coupled with the electrogenic transport of potassium into the cytoplasm. This subunit binds the periplasmic potassium ions and delivers the ions to the membrane domain of KdpB through an intramembrane tunnel. This is Potassium-transporting ATPase potassium-binding subunit from Salmonella newport (strain SL254).